Consider the following 127-residue polypeptide: Large ribosomal subunit protein bL12 (127 aa).

The protein belongs to the bacterial ribosomal protein bL12 family. As to quaternary structure, homodimer. Part of the ribosomal stalk of the 50S ribosomal subunit. Forms a multimeric L10(L12)X complex, where L10 forms an elongated spine to which 2 to 4 L12 dimers bind in a sequential fashion. Binds GTP-bound translation factors.

Forms part of the ribosomal stalk which helps the ribosome interact with GTP-bound translation factors. Is thus essential for accurate translation. The polypeptide is Large ribosomal subunit protein bL12 (Clavibacter michiganensis subsp. michiganensis (strain NCPPB 382)).